The following is a 471-amino-acid chain: Mitochondrial distribution and morphology protein 10 (471 aa).

The interval 429 to 455 (PSSFSSPSRAANSTPAGGGQSVGGGIS) is disordered. Residues 444–455 (AGGGQSVGGGIS) are compositionally biased toward gly residues.

This sequence belongs to the MDM10 family. Component of the ER-mitochondria encounter structure (ERMES) or MDM complex, composed of mmm1, mdm10, mdm12 and mdm34. Associates with the mitochondrial outer membrane sorting assembly machinery SAM(core) complex.

It is found in the mitochondrion outer membrane. Component of the ERMES/MDM complex, which serves as a molecular tether to connect the endoplasmic reticulum and mitochondria. Components of this complex are involved in the control of mitochondrial shape and protein biogenesis and may function in phospholipid exchange. mdm10 is involved in the late assembly steps of the general translocase of the mitochondrial outer membrane (TOM complex). Functions in the tom40-specific route of the assembly of outer membrane beta-barrel proteins, including the association of tom40 with the receptor tom22 and small TOM proteins. Can associate with the SAM(core) complex as well as the mdm12-mmm1 complex, both involved in late steps of the major beta-barrel assembly pathway, that is responsible for biogenesis of all outer membrane beta-barrel proteins. May act as a switch that shuttles between both complexes and channels precursor proteins into the tom40-specific pathway. Plays a role in mitochondrial morphology and in the inheritance of mitochondria. This is Mitochondrial distribution and morphology protein 10 (mdmB) from Aspergillus fumigatus (strain ATCC MYA-4609 / CBS 101355 / FGSC A1100 / Af293) (Neosartorya fumigata).